Here is a 125-residue protein sequence, read N- to C-terminus: MMCNLLLSCSVLLLSCSHLLAHPVTDTADMTYSGPDSVEEAGGVNPDDFSVSDLNEHLQRAAVAGYSPLFSQENIKVPGQIPKEALRELLLEKPYRLIPPRGLWGSRRQFRKRGGGADCFWKYCI.

The first 21 residues, 1 to 21 (MMCNLLLSCSVLLLSCSHLLA), serve as a signal peptide directing secretion. A propeptide spanning residues 109–111 (QFR) is cleaved from the precursor. A disulfide bond links cysteine 119 and cysteine 124.

Belongs to the urotensin-2 family.

The protein resides in the secreted. In terms of biological role, urotensin is found in the teleost caudal neurosecretory system. It has a suggested role in osmoregulation and as a corticotropin-releasing factor. The non-hormonal portion of this precursor may be a urotensin binding protein, urophysin. The chain is Prepro-urotensin II-gamma from Cyprinus carpio (Common carp).